The chain runs to 465 residues: Serine/threonine-protein kinase 38 (465 aa).

Alanine 2 bears the N-acetylalanine mark. Residues 62-87 are interaction with S100B; that stretch reads KRLRRSAHARKETEFLRLKRTRLGLE. At threonine 74 the chain carries Phosphothreonine. A Protein kinase domain is found at 89–382; the sequence is FESLKVIGRG…VEEIKSNSFF (294 aa). Residues 95-103 and lysine 118 contribute to the ATP site; that span reads IGRGAFGEV. The active-site Proton acceptor is the aspartate 212. Serine 264 is modified (phosphoserine). At serine 281 the chain carries Phosphoserine; by autocatalysis. Residues 306 to 311 carry the UFM1-interacting motif (UFIM) motif; it reads WSLGVI. Positions 383–455 constitute an AGC-kinase C-terminal domain; the sequence is EGVDWEHIRE…KRFEGLTARG (73 aa). Threonine 444 carries the post-translational modification Phosphothreonine; by STK24/MST3.

This sequence belongs to the protein kinase superfamily. AGC Ser/Thr protein kinase family. As to quaternary structure, homodimeric S100B binds two molecules of STK38. Interacts with MOB1 and MOB2. Interacts with MAP3K1 and MAP3K2 (via the kinase catalytic domain). Forms a tripartite complex with MOBKL1B and STK3/MST2. Interacts with MICAL1; leading to inhibit the protein kinase activity by antagonizing activation by MST1/STK4. Requires Mg(2+) as cofactor. Post-translationally, ISGylated. Phosphorylated by STK3/MST2 and this is enhanced by MOBKL1B. Ubiquitously expressed with highest levels observed in peripheral blood leukocytes.

It is found in the nucleus. It localises to the cytoplasm. Its subcellular location is the chromosome. The enzyme catalyses L-seryl-[protein] + ATP = O-phospho-L-seryl-[protein] + ADP + H(+). It catalyses the reaction L-threonyl-[protein] + ATP = O-phospho-L-threonyl-[protein] + ADP + H(+). Activated by binding of S100B which releases autoinhibitory N-lobe interactions, enabling ATP to bind and the autophosphorylation of Ser-281. Thr-444 then undergoes calcium-dependent phosphorylation by STK24/MST3. Interactions between phosphorylated Thr-444 and the N-lobe promote additional structural changes that complete the activation of the kinase. Autoinhibition is also released by the binding of MOB1/MOBKL1A and MOB2/HCCA2 to the N-terminal of STK38. Serine/threonine-protein kinase that acts as a negative regulator of MAP3K1/2 signaling. Converts MAP3K2 from its phosphorylated form to its non-phosphorylated form and inhibits autophosphorylation of MAP3K2. Acts as an ufmylation 'reader' in a kinase-independent manner: specifically recognizes and binds mono-ufmylated histone H4 in response to DNA damage, promoting the recruitment of SUV39H1 to the double-strand breaks, resulting in ATM activation. This is Serine/threonine-protein kinase 38 from Homo sapiens (Human).